A 304-amino-acid chain; its full sequence is ATP phosphoribosyltransferase (304 aa).

It belongs to the ATP phosphoribosyltransferase family. Long subfamily. Mg(2+) serves as cofactor.

The protein localises to the cytoplasm. The enzyme catalyses 1-(5-phospho-beta-D-ribosyl)-ATP + diphosphate = 5-phospho-alpha-D-ribose 1-diphosphate + ATP. The protein operates within amino-acid biosynthesis; L-histidine biosynthesis; L-histidine from 5-phospho-alpha-D-ribose 1-diphosphate: step 1/9. With respect to regulation, feedback inhibited by histidine. Functionally, catalyzes the condensation of ATP and 5-phosphoribose 1-diphosphate to form N'-(5'-phosphoribosyl)-ATP (PR-ATP). Has a crucial role in the pathway because the rate of histidine biosynthesis seems to be controlled primarily by regulation of HisG enzymatic activity. The protein is ATP phosphoribosyltransferase of Xylella fastidiosa (strain 9a5c).